The primary structure comprises 2212 residues: Nonribosomal peptide synthetase ftmPS (2212 aa).

The segment at 74–473 (TYAELDSLSD…IEHHLQQTLP (400 aa)) is adenylation 1. Residues 592 to 669 (PPSTLKETTI…EQSQRAGLIQ (78 aa)) form the Carrier 1 domain. At Ser629 the chain carries O-(pantetheine 4'-phosphoryl)serine. The interval 708-973 (EDIYPCTALQ…IATVPLRIRV (266 aa)) is condensation 1. The segment at 1167–1564 (TYRELWAHSS…LSAVEASLMR (398 aa)) is adenylation 2. The region spanning 1678–1757 (PMSDDNERRL…QFRHLITEDD (80 aa)) is the Carrier 2 domain. An O-(pantetheine 4'-phosphoryl)serine modification is found at Ser1715. Positions 1815–2070 (HFQFDLSGAI…CTNYIPYRLS (256 aa)) are condensation 2.

It belongs to the NRP synthetase family.

The enzyme catalyses L-proline + L-tryptophan + 2 ATP = brevianamide F + 2 AMP + 2 diphosphate + 2 H(+). It functions in the pathway mycotoxin biosynthesis. Functionally, nonribosomal peptide synthetase; part of the gene cluster that mediates the biosynthesis of fumitremorgins, indole alkaloids that carry not only intriguing chemical structures, but also interesting biological and pharmacological activities. The biosynthesis of fumitremorgin-type alkaloids begins by condensation of the two amino acids L-tryptophan and L-proline to brevianamide F, catalyzed by the non-ribosomal peptide synthetase ftmPS/ftmA. Brevianamide F is then prenylated by the prenyltransferase ftmPT1/ftmB in the presence of dimethylallyl diphosphate, resulting in the formation of tryprostatin B. The three cytochrome P450 monooxygenases, ftmP450-1/ftmC, ftmP450-2/ftmE and ftmP450-3/FtmG, are responsible for the conversion of tryprostatin B to 6-hydroxytryprostatin B, tryprostatin A to fumitremorgin C and fumitremorgin C to 12,13-dihydroxyfumitremorgin C, respectively. The putative methyltransferase ftmMT/ftmD is expected for the conversion of 6-hydroxytryprostatin B to tryprostatin A. FtmPT2/FtmH catalyzes the prenylation of 12,13-dihydroxyfumitre-morgin C in the presence of dimethylallyl diphosphate, resulting in the formation of fumitremorgin B. Fumitremorgin B is further converted to verruculogen by ftmOx1/ftmF via the insertion of an endoperoxide bond between the two prenyl moieties. Finally, verruculogen is further converted to fumitremorgin A by the verruculogen prenyltransferase ftmPT3. This Neosartorya fischeri (strain ATCC 1020 / DSM 3700 / CBS 544.65 / FGSC A1164 / JCM 1740 / NRRL 181 / WB 181) (Aspergillus fischerianus) protein is Nonribosomal peptide synthetase ftmPS (ftmPS).